The sequence spans 164 residues: Sperm axonemal maintenance protein CFAP97D1 (164 aa).

Residues leucine 61–alanine 88 adopt a coiled-coil conformation.

Belongs to the CFAP97 family. As to expression, expressed exclusively in testis.

Functionally, required for male fertility through its role in axonemal doublet stabilization which is essential for sperm motility and fertilization. The chain is Sperm axonemal maintenance protein CFAP97D1 (Cfap97d1) from Mus musculus (Mouse).